Here is a 177-residue protein sequence, read N- to C-terminus: Large ribosomal subunit protein uL6 (177 aa).

Belongs to the universal ribosomal protein uL6 family. Part of the 50S ribosomal subunit.

In terms of biological role, this protein binds to the 23S rRNA, and is important in its secondary structure. It is located near the subunit interface in the base of the L7/L12 stalk, and near the tRNA binding site of the peptidyltransferase center. This is Large ribosomal subunit protein uL6 from Micrococcus luteus (strain ATCC 4698 / DSM 20030 / JCM 1464 / CCM 169 / CCUG 5858 / IAM 1056 / NBRC 3333 / NCIMB 9278 / NCTC 2665 / VKM Ac-2230) (Micrococcus lysodeikticus).